Reading from the N-terminus, the 577-residue chain is MRASRYLIATQKETPSDAEIISHQLMLRAGMIRKLAAGLYTWLPLGLRTLRKVERIVREEMDKSGAQEVLMPAVQPAELWQESGRWEQYGGELLRLNDRHGRDFCFGPTHEEVITDLIRNELKSYKELPANFYQIQTKFRDERRPRFGVMRAREFIMKDAYSFHLNAESLDETYKVMHQTYCNIFDRLGLDYRPVQADSGSIGGSSSHEFHVLASSGEDAIVFSTSGDYAANIEKAEAVAPAGERPAPGEELKEVHTPGQRTIDAVSQFLGMPAERSVKTLLVKAEADENGESGLVALILRGDHTLNEIKAENLPGIAEPLTMATDEEIEKAIGCKPGSIGPVKLPVPVIVDRSAAHLADFVCGANKDDYHLTGVNWGRDAEISRVEDLRNVVEGDASPDGNGTLEIRRGIEVGHIFKLGNKYSKAMNASVLDEHGKTSIMEMGCYGIGVSRIVAASIEQNHDEKGIIWPDAIAPFEVAIVTLNGHKSPVVAEAGDKLYEQLRQAGYDVLLDDRNERPGVKFADIELIGIPHRFVVSERGLSAGTLEYKGRRDEEKQDIPVDEALSFLVKASPKGGL.

This sequence belongs to the class-II aminoacyl-tRNA synthetase family. ProS type 1 subfamily. Homodimer.

It is found in the cytoplasm. It catalyses the reaction tRNA(Pro) + L-proline + ATP = L-prolyl-tRNA(Pro) + AMP + diphosphate. Functionally, catalyzes the attachment of proline to tRNA(Pro) in a two-step reaction: proline is first activated by ATP to form Pro-AMP and then transferred to the acceptor end of tRNA(Pro). As ProRS can inadvertently accommodate and process non-cognate amino acids such as alanine and cysteine, to avoid such errors it has two additional distinct editing activities against alanine. One activity is designated as 'pretransfer' editing and involves the tRNA(Pro)-independent hydrolysis of activated Ala-AMP. The other activity is designated 'posttransfer' editing and involves deacylation of mischarged Ala-tRNA(Pro). The misacylated Cys-tRNA(Pro) is not edited by ProRS. The protein is Proline--tRNA ligase of Marinobacter nauticus (strain ATCC 700491 / DSM 11845 / VT8) (Marinobacter aquaeolei).